An 89-amino-acid chain; its full sequence is Small ribosomal subunit protein uS15 (89 aa).

The segment covering 1-10 has biased composition (basic and acidic residues); that stretch reads MSITAEKKQE. Positions 1–24 are disordered; it reads MSITAEKKQEVIQSNARAEGDTGS.

It belongs to the universal ribosomal protein uS15 family. In terms of assembly, part of the 30S ribosomal subunit. Forms a bridge to the 50S subunit in the 70S ribosome, contacting the 23S rRNA.

Functionally, one of the primary rRNA binding proteins, it binds directly to 16S rRNA where it helps nucleate assembly of the platform of the 30S subunit by binding and bridging several RNA helices of the 16S rRNA. In terms of biological role, forms an intersubunit bridge (bridge B4) with the 23S rRNA of the 50S subunit in the ribosome. In Novosphingobium aromaticivorans (strain ATCC 700278 / DSM 12444 / CCUG 56034 / CIP 105152 / NBRC 16084 / F199), this protein is Small ribosomal subunit protein uS15.